We begin with the raw amino-acid sequence, 427 residues long: Tumor necrosis factor receptor superfamily member 16 (427 aa).

A signal peptide spans 1 to 28 (MGAGATGRAMDGPRLLLLLLLGVSLGGA). At 29-250 (KEACPTGLYT…PVVTRGTTDN (222 aa)) the chain is on the extracellular side. TNFR-Cys repeat units lie at residues 31–64 (ACPTGLYTHSGECCKACNLGEGVAQPCGANQTVC), 66–107 (PCLD…DAVC), 108–146 (RCAYGYYQDETTGRCEACRVCEAGSGLVFSCQDKQNTVC), and 148–188 (ECPD…DAEC). Disulfide bonds link cysteine 32/cysteine 43, cysteine 44/cysteine 57, cysteine 47/cysteine 64, cysteine 67/cysteine 83, cysteine 86/cysteine 99, cysteine 89/cysteine 107, cysteine 109/cysteine 122, cysteine 125/cysteine 138, cysteine 128/cysteine 146, cysteine 149/cysteine 164, cysteine 167/cysteine 180, and cysteine 170/cysteine 188. Asparagine 60 is a glycosylation site (N-linked (GlcNAc...) asparagine). A disordered region spans residues 194-219 (RWITRSTPPEGSDSTAPSTQEPEAPP). Positions 197–214 (TRSTPPEGSDSTAPSTQE) are enriched in polar residues. A helical transmembrane segment spans residues 251–272 (LIPVYCSILAAVVVGLVAYIAF). At 273 to 427 (KRWNSCKQNK…CSESTATSPV (155 aa)) the chain is on the cytoplasmic side. 2 stretches are compositionally biased toward polar residues: residues 281 to 291 (NKQGANSRPVN) and 305 to 326 (SGISVDSQSLHDQQPHTQTASG). Residues 281 to 338 (NKQGANSRPVNQTPPPEGEKLHSDSGISVDSQSLHDQQPHTQTASGQALKGDGGLYSS) form a disordered region. Phosphoserine is present on serine 311. The mediates interaction with KIDINS220 stretch occupies residues 326 to 341 (GQALKGDGGLYSSLPP). The region spanning 344–421 (REEVEKLLNG…DLVESLCSES (78 aa)) is the Death domain.

In terms of assembly, homodimer; disulfide-linked. Heterodimer with SORCS2. The extracellular domains of the heterodimer bind NGF. The cytoplasmic region of the heterodimer binds TRIO. NGF binding mediates dissociation of TRIO from the receptor complex. Interacts with RTN4R. Interacts with TRAF2, TRAF4, TRAF6, PTPN13 and RANBP9. Interacts through TRAF6 with SQSTM1 which bridges NGFR to NTRK1. Interacts with BEX1. Interacts with BEX3. Interacts with KIDINS220 and NTRK1. Can form a ternary complex with NTRK1 and KIDINS220 and this complex is affected by the expression levels of KIDINS220. An increase in KIDINS220 expression leads to a decreased association of NGFR and NTRK1. Interacts with NTRK2; may regulate the ligand specificity of the NTRK2 receptor. Interacts (via death domain) with RAB31. Interacts with LINGO1. Interacts with NRADD. Interacts with MAGED1; the interaction antagonizes the association NGFR:NTRK1. Interacts (via death domain) with ARHGDIA and RIPK2. Interacts with BFAR. Post-translationally, N- and O-glycosylated. In terms of processing, O-linked glycans consist of Gal(1-3)GalNAc core elongated by 1 or 2 NeuNAc. Phosphorylated on serine residues.

Its subcellular location is the cell membrane. It is found in the cytoplasm. The protein localises to the perikaryon. The protein resides in the cell projection. It localises to the growth cone. Its subcellular location is the dendritic spine. In terms of biological role, low affinity receptor which can bind to NGF, BDNF, NTF3, and NTF4. Forms a heterodimeric receptor with SORCS2 that binds the precursor forms of NGF, BDNF and NTF3 with high affinity, and has much lower affinity for mature NGF and BDNF. Plays an important role in differentiation and survival of specific neuronal populations during development. Can mediate cell survival as well as cell death of neural cells. Plays a role in the inactivation of RHOA. Plays a role in the regulation of the translocation of GLUT4 to the cell surface in adipocytes and skeletal muscle cells in response to insulin, probably by regulating RAB31 activity, and thereby contributes to the regulation of insulin-dependent glucose uptake. Necessary for the circadian oscillation of the clock genes BMAL1, PER1, PER2 and NR1D1 in the suprachiasmatic nucleus (SCmgetaN) of the brain and in liver and of the genes involved in glucose and lipid metabolism in the liver. Together with BFAR negatively regulates NF-kappa-B and JNK-related signaling pathways. This Homo sapiens (Human) protein is Tumor necrosis factor receptor superfamily member 16 (NGFR).